Reading from the N-terminus, the 177-residue chain is Embryogenesis-like protein (177 aa).

A coiled-coil region spans residues 98 to 118 (VDEINLKFAEAREEIEMAMDA).

In terms of assembly, interacts with HAG1/GCN5. Expressed in flowers, leaves, stems and siliques.

The protein resides in the nucleus. In terms of biological role, activates gene expression by recruiting HAG1/GCN5 and triggering subsequent histone H3 acetylation of target genes promoters. This Arabidopsis thaliana (Mouse-ear cress) protein is Embryogenesis-like protein.